A 267-amino-acid polypeptide reads, in one-letter code: Cyclin-C (267 aa).

The Cyclin N-terminal domain maps to 48–151 (IQVLGEQLKL…LLENLDCCLI (104 aa)).

The protein belongs to the cyclin family. Cyclin C subfamily. As to quaternary structure, component of the Cdk8 module of the Mediator complex.

The protein localises to the nucleus. In terms of biological role, component of the Mediator complex, a coactivator involved in regulated gene transcription of nearly all RNA polymerase II-dependent genes. Mediator functions as a bridge to convey information from gene-specific regulatory proteins to the basal RNA polymerase II transcription machinery. Mediator is recruited to promoters by direct interactions with regulatory proteins and serves as a scaffold for the assembly of a functional preinitiation complex with RNA polymerase II and the general transcription factors. Binds to and activates cyclin-dependent kinase Cdk8 that phosphorylates the CTD (C-terminal domain) of the large subunit of RNA polymerase II (RNAp II), which may inhibit the formation of a transcription initiation complex. This is Cyclin-C (CycC) from Drosophila pseudoobscura pseudoobscura (Fruit fly).